The chain runs to 275 residues: MSAEVKVTGQNQEQFLLLAKSAKGAALATLIHQVLEAPGVYVFGELLDMPNVRELAESDFASTFRLLTVFAYGTYADYLAEARNLPPLTEAQKNKLRHLSVVTLAAKVKCIPYAVLLEALALRNVRQLEDLVIEAVYADVLRGSLDQRNQRLEVDYSIGRDIQRQDLSAIARTLQEWCVGCEVVLSGIEEQVSRANQHKEQQLGLKQQIESEVANLKKTIKVTTAAAAAATSQDPEQHLTELREPAPGTNQRQPSKKASKGKGLRGSAKIWSKSN.

Ser2 bears the N-acetylserine mark. The PCI domain maps to 2-159 (SAEVKVTGQN…QRLEVDYSIG (158 aa)). Residues 185–233 (LSGIEEQVSRANQHKEQQLGLKQQIESEVANLKKTIKVTTAAAAAATSQ) are a coiled coil. The disordered stretch occupies residues 227 to 275 (AAAATSQDPEQHLTELREPAPGTNQRQPSKKASKGKGLRGSAKIWSKSN). A compositionally biased stretch (basic and acidic residues) spans 235–244 (PEQHLTELRE). Residues 254-263 (PSKKASKGKG) show a composition bias toward basic residues.

Belongs to the CSN7/EIF3M family. CSN7 subfamily. As to quaternary structure, component of the CSN complex, composed of COPS1/GPS1, COPS2, COPS3, COPS4, COPS5, COPS6, COPS7 (COPS7A or COPS7B), COPS8 and COPS9. In the complex, it probably interacts directly with COPS1, COPS2, COPS4, COPS5, COPS6 and COPS8. Interacts with PMF1. Interacts with the translation initiation factor EIF3S6. Interacts with CK2 and PKD. Interacts directly with ID3. Phosphorylated by CK2 and PKD kinases.

The protein resides in the cytoplasm. It is found in the nucleus. Component of the COP9 signalosome complex (CSN), a complex involved in various cellular and developmental processes. The CSN complex is an essential regulator of the ubiquitin (Ubl) conjugation pathway by mediating the deneddylation of the cullin subunits of SCF-type E3 ligase complexes, leading to decrease the Ubl ligase activity of SCF-type complexes such as SCF, CSA or DDB2. The complex is also involved in phosphorylation of p53/TP53, JUN, I-kappa-B-alpha/NFKBIA, ITPK1 and IRF8/ICSBP, possibly via its association with CK2 and PKD kinases. CSN-dependent phosphorylation of TP53 and JUN promotes and protects degradation by the Ubl system, respectively. In Pongo abelii (Sumatran orangutan), this protein is COP9 signalosome complex subunit 7a (COPS7A).